Reading from the N-terminus, the 488-residue chain is MARRNFKVLYVSGESSPFVRVSSLADYMASFPQALEEEGFEARIMMPKYGIINDRKFRLHDVLRLSDIEVPLKDKTDMLHIKVTALPSSKIQTYFLYNEKYFKRYGLFSDISLGGDHKGSAERIIFFSVGVMETLVRLGWQPDIIHCHDWHAGLVALLAKTRYAKHDFFKKVKVVQTIHNVYRQGVFPSKAFQKHLDPEVCDALDMEGGEVNLLATGIKHADLVTTTSDRYARQLLDDPELSFGMDKALKACGDRFHGILNGMDTRQWNPSSDKLIKKRYSAEQPEMKLEDKKVLLEEVGLPFSEETPVVGVIGSFDQYQGAEIVKASLAKLLELDIQLIVFGSGDKEFDQALKETAEENEEKMAFRPEFTDAFYHQMIAGLDILLMTSRIEACGMMQMFAMNYGTVPVAYAGGGIVDTIEEVSGDKGTGFIFTDYTPEALTAKLQEALALFANRERWSALMLECMGRDFSWSTSAGQYAELYRNLLG.

Arg-20 contributes to the ADP-alpha-D-glucose binding site.

Belongs to the glycosyltransferase 1 family. Bacterial/plant glycogen synthase subfamily.

The catalysed reaction is [(1-&gt;4)-alpha-D-glucosyl](n) + ADP-alpha-D-glucose = [(1-&gt;4)-alpha-D-glucosyl](n+1) + ADP + H(+). It participates in glycan biosynthesis; glycogen biosynthesis. Its function is as follows. Synthesizes alpha-1,4-glucan chains using ADP-glucose. This chain is Glycogen synthase, found in Chlorobaculum tepidum (strain ATCC 49652 / DSM 12025 / NBRC 103806 / TLS) (Chlorobium tepidum).